The primary structure comprises 193 residues: Acyl carrier protein phosphodiesterase (193 aa).

The protein belongs to the AcpH family.

It catalyses the reaction holo-[ACP] + H2O = apo-[ACP] + (R)-4'-phosphopantetheine + H(+). In terms of biological role, converts holo-ACP to apo-ACP by hydrolytic cleavage of the phosphopantetheine prosthetic group from ACP. The protein is Acyl carrier protein phosphodiesterase of Escherichia coli O6:K15:H31 (strain 536 / UPEC).